Here is a 69-residue protein sequence, read N- to C-terminus: U2-agatoxin-Ao1e (69 aa).

Positions 1–20 are cleaved as a signal peptide; it reads MRAIISVLLISAMVFSIIEA. Residues 21-34 constitute a propeptide that is removed on maturation; that stretch reads VPLEEGLQLFEAER. Cystine bridges form between C37/C53, C44/C58, and C52/C68.

The protein belongs to the neurotoxin 01 (U2-agtx) family. As to expression, expressed by the venom gland.

The protein localises to the secreted. Functionally, insect active toxin causing rapid but reversible paralysis in crickets. No activity shown in mammals. Does not show effect on mammalian voltage-gated calcium channels. The polypeptide is U2-agatoxin-Ao1e (Agelena orientalis (Funnel-web spider)).